The chain runs to 558 residues: Polysialic acid transport protein KpsD (558 aa).

A signal peptide spans 1–20; sequence MKLFKSILLIAACHAAQASA.

This sequence to E.coli K5 KpsD.

Its subcellular location is the periplasm. In terms of biological role, involved in the translocation of the polysialic acid capsule across the outer membrane to the cell surface. May function as the periplasmic binding element of the PSA transport system, in which it transiently interacts with the membrane component of the transporter, binds polysaccharide and transports the polymer to a component in the outer membrane. This is Polysialic acid transport protein KpsD (kpsD) from Escherichia coli.